Consider the following 343-residue polypeptide: Ribosomal RNA small subunit methyltransferase, chloroplastic (343 aa).

A chloroplast-targeting transit peptide spans 1 to 48; it reads MMNAVITSATINCNSLSPSWTCGDNSPSKLLLGEISAALSRRRTVKVS. 6 residues coordinate S-adenosyl-L-methionine: H78, M80, G105, E126, D151, and N183.

The protein belongs to the class I-like SAM-binding methyltransferase superfamily. rRNA adenine N(6)-methyltransferase family.

The protein localises to the plastid. It localises to the chloroplast. Its function is as follows. Required for methylation of the 3' adenosines in the small subunit of plastid rRNA. Essential for chloroplast biogenesis at low temperatures. The polypeptide is Ribosomal RNA small subunit methyltransferase, chloroplastic (Arabidopsis thaliana (Mouse-ear cress)).